Here is a 122-residue protein sequence, read N- to C-terminus: uncharacterized protein (122 aa).

This is an uncharacterized protein from Caenorhabditis elegans.